The following is a 190-amino-acid chain: Large ribosomal subunit protein bL25 (190 aa).

The tract at residues 1–20 (MSEQKTLSVQKRDNLGKGAN) is disordered.

This sequence belongs to the bacterial ribosomal protein bL25 family. CTC subfamily. Part of the 50S ribosomal subunit; part of the 5S rRNA/L5/L18/L25 subcomplex. Contacts the 5S rRNA. Binds to the 5S rRNA independently of L5 and L18.

In terms of biological role, this is one of the proteins that binds to the 5S RNA in the ribosome where it forms part of the central protuberance. The protein is Large ribosomal subunit protein bL25 of Nitratidesulfovibrio vulgaris (strain ATCC 29579 / DSM 644 / CCUG 34227 / NCIMB 8303 / VKM B-1760 / Hildenborough) (Desulfovibrio vulgaris).